A 191-amino-acid chain; its full sequence is Phosphopantetheine adenylyltransferase (191 aa).

Position 8 (S8) interacts with substrate. ATP is bound by residues 8–9 (SF) and H16. Positions 40, 72, and 86 each coordinate substrate. Residues 87–89 (GLR), E97, and 122–128 (YSFLSSS) contribute to the ATP site.

It belongs to the bacterial CoaD family. As to quaternary structure, homohexamer. Mg(2+) is required as a cofactor.

It localises to the cytoplasm. It carries out the reaction (R)-4'-phosphopantetheine + ATP + H(+) = 3'-dephospho-CoA + diphosphate. The protein operates within cofactor biosynthesis; coenzyme A biosynthesis; CoA from (R)-pantothenate: step 4/5. Its function is as follows. Reversibly transfers an adenylyl group from ATP to 4'-phosphopantetheine, yielding dephospho-CoA (dPCoA) and pyrophosphate. In Nostoc sp. (strain PCC 7120 / SAG 25.82 / UTEX 2576), this protein is Phosphopantetheine adenylyltransferase.